The sequence spans 559 residues: Formate--tetrahydrofolate ligase (559 aa).

An ATP-binding site is contributed by 68–75 (TPAGEGKT).

It belongs to the formate--tetrahydrofolate ligase family.

The enzyme catalyses (6S)-5,6,7,8-tetrahydrofolate + formate + ATP = (6R)-10-formyltetrahydrofolate + ADP + phosphate. The protein operates within one-carbon metabolism; tetrahydrofolate interconversion. This chain is Formate--tetrahydrofolate ligase, found in Rhizobium meliloti (strain 1021) (Ensifer meliloti).